Reading from the N-terminus, the 95-residue chain is Co-chaperonin GroES (95 aa).

This sequence belongs to the GroES chaperonin family. As to quaternary structure, heptamer of 7 subunits arranged in a ring. Interacts with the chaperonin GroEL.

It is found in the cytoplasm. Functionally, together with the chaperonin GroEL, plays an essential role in assisting protein folding. The GroEL-GroES system forms a nano-cage that allows encapsulation of the non-native substrate proteins and provides a physical environment optimized to promote and accelerate protein folding. GroES binds to the apical surface of the GroEL ring, thereby capping the opening of the GroEL channel. The sequence is that of Co-chaperonin GroES from Chlorobium limicola (strain DSM 245 / NBRC 103803 / 6330).